The sequence spans 871 residues: Leucine--tRNA ligase (871 aa).

The 'HIGH' region motif lies at 43–53 (PYPSGRIHIGH). The 'KMSKS' region signature appears at 629–633 (KMSKS). K632 provides a ligand contact to ATP.

This sequence belongs to the class-I aminoacyl-tRNA synthetase family.

It is found in the cytoplasm. The catalysed reaction is tRNA(Leu) + L-leucine + ATP = L-leucyl-tRNA(Leu) + AMP + diphosphate. This Chelativorans sp. (strain BNC1) protein is Leucine--tRNA ligase.